Reading from the N-terminus, the 795-residue chain is Phenylalanine--tRNA ligase beta subunit (795 aa).

The tRNA-binding domain maps to 39 to 148; that stretch reads AGQFHGVVVG…IDAPLGVDLR (110 aa). In terms of domain architecture, B5 spans 401 to 476; the sequence is PQSATITLRR…RIYGYNNIPD (76 aa). Mg(2+)-binding residues include D454, D460, E463, and E464. One can recognise an FDX-ACB domain in the interval 701–794; the sequence is SRFPSNRRDI…LKQRFQASLR (94 aa).

Belongs to the phenylalanyl-tRNA synthetase beta subunit family. Type 1 subfamily. As to quaternary structure, tetramer of two alpha and two beta subunits. It depends on Mg(2+) as a cofactor.

It is found in the cytoplasm. The enzyme catalyses tRNA(Phe) + L-phenylalanine + ATP = L-phenylalanyl-tRNA(Phe) + AMP + diphosphate + H(+). In Photorhabdus laumondii subsp. laumondii (strain DSM 15139 / CIP 105565 / TT01) (Photorhabdus luminescens subsp. laumondii), this protein is Phenylalanine--tRNA ligase beta subunit.